The sequence spans 189 residues: Putative manganese efflux pump MntP (189 aa).

6 helical membrane passes run 3–23, 41–61, 65–85, 104–124, 132–152, and 167–187; these read LSATIILAFAMSMDAFAASIG, LIFGVIEAITPLIGWCIGLFA, IMEWDHWIAFSLLFILGCRMI, FWVLVTTAIATSLDAMAIGVG, IVHTAMAIGLATMIMATLGML, and IIGGIVLIGIGFNILYEHMHL.

This sequence belongs to the MntP (TC 9.B.29) family.

It localises to the cell inner membrane. Its function is as follows. Probably functions as a manganese efflux pump. In Yersinia pseudotuberculosis serotype O:1b (strain IP 31758), this protein is Putative manganese efflux pump MntP.